Here is a 336-residue protein sequence, read N- to C-terminus: Glycerol-3-phosphate dehydrogenase [NAD(P)+] (336 aa).

The NADPH site is built by serine 11, tryptophan 12, and lysine 106. Residues lysine 106, glycine 134, and serine 136 each coordinate sn-glycerol 3-phosphate. Alanine 138 lines the NADPH pocket. Sn-glycerol 3-phosphate-binding residues include lysine 189, aspartate 242, serine 252, arginine 253, and asparagine 254. Lysine 189 serves as the catalytic Proton acceptor. Arginine 253 is a binding site for NADPH. Residues valine 277 and glutamate 279 each coordinate NADPH.

The protein belongs to the NAD-dependent glycerol-3-phosphate dehydrogenase family.

It localises to the cytoplasm. It carries out the reaction sn-glycerol 3-phosphate + NAD(+) = dihydroxyacetone phosphate + NADH + H(+). The catalysed reaction is sn-glycerol 3-phosphate + NADP(+) = dihydroxyacetone phosphate + NADPH + H(+). It functions in the pathway membrane lipid metabolism; glycerophospholipid metabolism. In terms of biological role, catalyzes the reduction of the glycolytic intermediate dihydroxyacetone phosphate (DHAP) to sn-glycerol 3-phosphate (G3P), the key precursor for phospholipid synthesis. The polypeptide is Glycerol-3-phosphate dehydrogenase [NAD(P)+] (Agathobacter rectalis (strain ATCC 33656 / DSM 3377 / JCM 17463 / KCTC 5835 / VPI 0990) (Eubacterium rectale)).